The sequence spans 427 residues: Trigger factor (427 aa).

The region spanning 163 to 248 is the PPIase FKBP-type domain; it reads GDTVILDFEG…LHEIKTKEVP (86 aa).

The protein belongs to the FKBP-type PPIase family. Tig subfamily.

Its subcellular location is the cytoplasm. It carries out the reaction [protein]-peptidylproline (omega=180) = [protein]-peptidylproline (omega=0). Functionally, involved in protein export. Acts as a chaperone by maintaining the newly synthesized protein in an open conformation. Functions as a peptidyl-prolyl cis-trans isomerase. The chain is Trigger factor from Listeria welshimeri serovar 6b (strain ATCC 35897 / DSM 20650 / CCUG 15529 / CIP 8149 / NCTC 11857 / SLCC 5334 / V8).